The primary structure comprises 118 residues: Large ribosomal subunit protein uL18 (118 aa).

Belongs to the universal ribosomal protein uL18 family. In terms of assembly, part of the 50S ribosomal subunit; part of the 5S rRNA/L5/L18/L25 subcomplex. Contacts the 5S and 23S rRNAs.

In terms of biological role, this is one of the proteins that bind and probably mediate the attachment of the 5S RNA into the large ribosomal subunit, where it forms part of the central protuberance. This Ligilactobacillus salivarius (strain UCC118) (Lactobacillus salivarius) protein is Large ribosomal subunit protein uL18.